The primary structure comprises 158 residues: Non-secretory ribonuclease (158 aa).

The first 27 residues, 1–27 (MVPKLFTSQICLLLLLGLSSLEVSLHA), serve as a signal peptide directing secretion. A glycan (C-linked (Man) tryptophan) is linked at Trp34. His42 (proton acceptor) is an active-site residue. Tyr60 is modified (3'-nitrotyrosine). 65–69 (KNRNT) is a binding site for substrate. 3 N-linked (GlcNAc...) asparagine glycosylation sites follow: Asn86, Asn92, and Asn111. His153 functions as the Proton donor in the catalytic mechanism.

It belongs to the pancreatic ribonuclease family. As to quaternary structure, interacts with and forms a tight 1:1 complex with RNH1. Dimerization of two such complexes may occur.

It localises to the lysosome. Its subcellular location is the cytoplasmic granule. The catalysed reaction is an [RNA] containing cytidine + H2O = an [RNA]-3'-cytidine-3'-phosphate + a 5'-hydroxy-ribonucleotide-3'-[RNA].. It carries out the reaction an [RNA] containing uridine + H2O = an [RNA]-3'-uridine-3'-phosphate + a 5'-hydroxy-ribonucleotide-3'-[RNA].. This is a non-secretory ribonuclease. It is a pyrimidine specific nuclease with a slight preference for U. Cytotoxin and helminthotoxin. Possesses a wide variety of biological activities. The sequence is that of Non-secretory ribonuclease (RNASE2) from Saguinus labiatus (Red-chested mustached tamarin).